A 362-amino-acid chain; its full sequence is Zinc phosphodiesterase ELAC protein 1 (362 aa).

The Zn(2+) site is built by His-62, His-64, Asp-66, His-67, His-181, Asp-252, and His-312. Asp-66 (proton acceptor) is an active-site residue.

This sequence belongs to the RNase Z family. In terms of assembly, homodimer. Zn(2+) is required as a cofactor.

The protein resides in the cytoplasm. It is found in the cytosol. Its subcellular location is the nucleus. It carries out the reaction Endonucleolytic cleavage of RNA, removing extra 3' nucleotides from tRNA precursor, generating 3' termini of tRNAs. A 3'-hydroxy group is left at the tRNA terminus and a 5'-phosphoryl group is left at the trailer molecule.. Zinc phosphodiesterase, which displays some tRNA 3'-processing endonuclease activity. Specifically involved in tRNA repair: acts downstream of the ribosome-associated quality control (RQC) pathway by removing a 2',3'-cyclic phosphate from tRNAs following cleavage by ANKZF1. tRNAs are then processed by TRNT1. This Mus musculus (Mouse) protein is Zinc phosphodiesterase ELAC protein 1 (Elac1).